A 249-amino-acid chain; its full sequence is 1-(5-phosphoribosyl)-5-[(5-phosphoribosylamino)methylideneamino] imidazole-4-carboxamide isomerase (249 aa).

Aspartate 10 functions as the Proton acceptor in the catalytic mechanism. Aspartate 136 (proton donor) is an active-site residue.

It belongs to the HisA/HisF family.

The protein resides in the cytoplasm. The enzyme catalyses 1-(5-phospho-beta-D-ribosyl)-5-[(5-phospho-beta-D-ribosylamino)methylideneamino]imidazole-4-carboxamide = 5-[(5-phospho-1-deoxy-D-ribulos-1-ylimino)methylamino]-1-(5-phospho-beta-D-ribosyl)imidazole-4-carboxamide. Its pathway is amino-acid biosynthesis; L-histidine biosynthesis; L-histidine from 5-phospho-alpha-D-ribose 1-diphosphate: step 4/9. The chain is 1-(5-phosphoribosyl)-5-[(5-phosphoribosylamino)methylideneamino] imidazole-4-carboxamide isomerase from Symbiobacterium thermophilum (strain DSM 24528 / JCM 14929 / IAM 14863 / T).